Here is a 217-residue protein sequence, read N- to C-terminus: Large ribosomal subunit protein uL3 (217 aa).

Residues 133-145 (GRASHGNSRSHNV) are compositionally biased toward polar residues. The interval 133 to 153 (GRASHGNSRSHNVPGSIGMAQ) is disordered. Gln-153 is modified (N5-methylglutamine).

Belongs to the universal ribosomal protein uL3 family. In terms of assembly, part of the 50S ribosomal subunit. Forms a cluster with proteins L14 and L19. In terms of processing, methylated by PrmB.

In terms of biological role, one of the primary rRNA binding proteins, it binds directly near the 3'-end of the 23S rRNA, where it nucleates assembly of the 50S subunit. The chain is Large ribosomal subunit protein uL3 from Ralstonia pickettii (strain 12J).